A 172-amino-acid chain; its full sequence is NADH-ubiquinone oxidoreductase chain 6 (172 aa).

The next 6 helical transmembrane spans lie at 1 to 21, 25 to 45, 48 to 68, 86 to 106, 108 to 128, and 141 to 161; these read MLSL…VVVL, PYFS…IVLY, GTFL…VVFV, VIWF…MSFN, FFLD…IFGA, and LILV…LVVV.

The protein belongs to the complex I subunit 6 family.

It is found in the mitochondrion membrane. The catalysed reaction is a ubiquinone + NADH + 5 H(+)(in) = a ubiquinol + NAD(+) + 4 H(+)(out). Core subunit of the mitochondrial membrane respiratory chain NADH dehydrogenase (Complex I) that is believed to belong to the minimal assembly required for catalysis. Complex I functions in the transfer of electrons from NADH to the respiratory chain. The immediate electron acceptor for the enzyme is believed to be ubiquinone. The sequence is that of NADH-ubiquinone oxidoreductase chain 6 (MT-ND6) from Petromyzon marinus (Sea lamprey).